The following is a 494-amino-acid chain: Cytochrome P450 2C23 (494 aa).

A Phosphoserine modification is found at Ser-131. An N6-acetyllysine mark is found at Lys-253 and Lys-379. Heme is bound at residue Cys-439.

The protein belongs to the cytochrome P450 family. Heme is required as a cofactor. In terms of tissue distribution, expressed in kidney and liver. Expressed in cortical tubules of kidney (at protein level).

Its subcellular location is the endoplasmic reticulum membrane. It is found in the microsome membrane. The catalysed reaction is (5Z,8Z,11Z,14Z)-eicosatetraenoate + reduced [NADPH--hemoprotein reductase] + O2 = (8R,9S)-epoxy-(5Z,11Z,14Z)-eicosatrienoate + oxidized [NADPH--hemoprotein reductase] + H2O + H(+). It catalyses the reaction (5Z,8Z,11Z,14Z)-eicosatetraenoate + reduced [NADPH--hemoprotein reductase] + O2 = (11R,12S)-epoxy-(5Z,8Z,14Z)-eicosatrienoate + oxidized [NADPH--hemoprotein reductase] + H2O + H(+). The enzyme catalyses (5Z,8Z,11Z,14Z)-eicosatetraenoate + reduced [NADPH--hemoprotein reductase] + O2 = (11S,12R)-epoxy-(5Z,8Z,14Z)-eicosatrienoate + oxidized [NADPH--hemoprotein reductase] + H2O + H(+). It carries out the reaction (5Z,8Z,11Z,14Z)-eicosatetraenoate + reduced [NADPH--hemoprotein reductase] + O2 = (14R,15S)-epoxy-(5Z,8Z,11Z)-eicosatrienoate + oxidized [NADPH--hemoprotein reductase] + H2O + H(+). The catalysed reaction is (5Z,8Z,11Z,14Z)-eicosatetraenoate + reduced [NADPH--hemoprotein reductase] + O2 = (14S,15R)-epoxy-(5Z,8Z,11Z)-eicosatrienoate + oxidized [NADPH--hemoprotein reductase] + H2O + H(+). It catalyses the reaction (5Z,8Z,11Z,14Z,17Z)-eicosapentaenoate + reduced [NADPH--hemoprotein reductase] + O2 = 8,9-epoxy-(5Z,11Z,14Z,17Z)-eicosatetraenoate + oxidized [NADPH--hemoprotein reductase] + H2O + H(+). The enzyme catalyses (5Z,8Z,11Z,14Z,17Z)-eicosapentaenoate + reduced [NADPH--hemoprotein reductase] + O2 = 11,12-epoxy-(5Z,8Z,14Z,17Z)-eicosatetraenoate + oxidized [NADPH--hemoprotein reductase] + H2O + H(+). It carries out the reaction (5Z,8Z,11Z,14Z,17Z)-eicosapentaenoate + reduced [NADPH--hemoprotein reductase] + O2 = 14,15-epoxy-(5Z,8Z,11Z,17Z)-eicosatetraenoate + oxidized [NADPH--hemoprotein reductase] + H2O + H(+). The catalysed reaction is (5Z,8Z,11Z,14Z,17Z)-eicosapentaenoate + reduced [NADPH--hemoprotein reductase] + O2 = (17R,18S)-epoxy-(5Z,8Z,11Z,14Z)-eicosatetraenoate + oxidized [NADPH--hemoprotein reductase] + H2O + H(+). It catalyses the reaction (5Z,8Z,11Z,14Z,17Z)-eicosapentaenoate + reduced [NADPH--hemoprotein reductase] + O2 = (17S,18R)-epoxy-(5Z,8Z,11Z,14Z)-eicosatetraenoate + oxidized [NADPH--hemoprotein reductase] + H2O + H(+). The enzyme catalyses 20-hydroxy-(5Z,8Z,11Z,14Z)-eicosatetraenoate + reduced [NADPH--hemoprotein reductase] + O2 = 20-hydroxy-8,9-epoxy-(5Z,11Z,14Z)-eicosatrienoate + oxidized [NADPH--hemoprotein reductase] + H2O + H(+). The protein operates within lipid metabolism; arachidonate metabolism. A cytochrome P450 monooxygenase involved in polyunsaturated fatty acids (PUFAs) metabolism and signaling. Catalyzes preferentially the epoxidation of double bonds of PUFAs. Converts arachidonic acid (ARA, C20:4(n-6)) primarily to stereospecific products 8R,9S-, 11R,12S-, and 14S,15R-EET. Plays a major role in the formation of EETs and hydroxy-EETs (HEETs) in kidney. Via EETs may inhibit the epithelial sodium channels (ENaCs) in nephron segments, preventing excessive sodium absorption during high dietary salt intake. Participates in the formation of anti-inflammatory hydroxyepoxyeicosatrienoic acids (HEETs) by converting 20-hydroxyeicosatetraenoic acid (20-HETE) to 20,8,9-HEET, an activator of PPARA. Metabolizes eicosapentaenoic acid (EPA, C20:5(n-3)) to epoxyeicosatetraenoic acid (EETeTr) regioisomers, 8,9-, 11,12-, 14,15-, and 17,18-EETeTr, preferentially producing 17R,18S enantiomer. Mechanistically, uses molecular oxygen inserting one oxygen atom into a substrate, and reducing the second into a water molecule, with two electrons provided by NADPH via cytochrome P450 reductase (NADPH--hemoprotein reductase). This is Cytochrome P450 2C23 from Rattus norvegicus (Rat).